Here is a 968-residue protein sequence, read N- to C-terminus: Ribonuclease E (968 aa).

The S1 motif domain occupies 39–119 (SNIYKGKITR…GTKGAALTTF (81 aa)). Residues D303 and D346 each coordinate Mg(2+). C404 and C407 together coordinate Zn(2+). Residues 404 to 407 (CPRC) are required for zinc-mediated homotetramerization and catalytic activity. Residues 947 to 968 (IKNSAGAHSATNFSTSPVKKSE) are disordered. The span at 955-968 (SATNFSTSPVKKSE) shows a compositional bias: polar residues.

The protein belongs to the RNase E/G family. RNase E subfamily. Component of the RNA degradosome, which is a multiprotein complex involved in RNA processing and mRNA degradation. Within the RNA degradosome, RNase E assembles into a homotetramer formed by a dimer of dimers. The cofactor is Zn(2+). It depends on Mg(2+) as a cofactor.

Its subcellular location is the cytoplasm. The protein localises to the cell inner membrane. It carries out the reaction Endonucleolytic cleavage of single-stranded RNA in A- and U-rich regions.. Endoribonuclease that plays a central role in RNA processing and decay. Required for the maturation of 5S and 16S rRNAs and the majority of tRNAs. Also involved in the degradation of most mRNAs. In Buchnera aphidicola subsp. Schizaphis graminum (strain Sg), this protein is Ribonuclease E.